A 95-amino-acid chain; its full sequence is Probable dolichol-phosphate mannosyltransferase subunit 3 (95 aa).

The next 2 membrane-spanning stretches (helical) occupy residues 10–30 (AHVI…VPVL) and 44–64 (APFF…VYGV).

Belongs to the DPM3 family.

It is found in the endoplasmic reticulum membrane. It functions in the pathway protein modification; protein glycosylation. In terms of biological role, stabilizer subunit of the dolichol-phosphate-mannose synthase complex. The polypeptide is Probable dolichol-phosphate mannosyltransferase subunit 3 (dpm-3) (Caenorhabditis elegans).